We begin with the raw amino-acid sequence, 326 residues long: Melanocortin receptor 4 (326 aa).

A compositionally biased stretch (basic residues) spans 1–14 (MNTSHHHGLHHSFR). The interval 1 to 31 (MNTSHHHGLHHSFRNHSQGALPVGKPSHGDR) is disordered. The Extracellular portion of the chain corresponds to 1–46 (MNTSHHHGLHHSFRNHSQGALPVGKPSHGDRGSASGCYEQLLISTE). N-linked (GlcNAc...) asparagine glycosylation is found at asparagine 2 and asparagine 15. A helical membrane pass occupies residues 47–67 (IFLTLGLVSLLENILVIAAIV). Residues 68-71 (KNKN) lie on the Cytoplasmic side of the membrane. The helical transmembrane segment at 72–92 (LHSPMYFFICSLAVADLLVSV) threads the bilayer. Residues 93-121 (SNASETVVMALITGGNLTNRESIIKNMDN) are Extracellular-facing. Residues asparagine 94 and asparagine 108 are each glycosylated (N-linked (GlcNAc...) asparagine). The chain crosses the membrane as a helical span at residues 122–142 (VFDSMICSSLLASIWSLLAIA). At 143-163 (VDRYITIFYALRYHNIMTQRR) the chain is on the cytoplasmic side. Residues 164 to 184 (AGTIITCIWTFCTVSGVLFIV) traverse the membrane as a helical segment. The Extracellular segment spans residues 185–190 (YSESTT). Residues 191 to 211 (VLICLISMFFTMLALMASLYV) form a helical membrane-spanning segment. The Cytoplasmic portion of the chain corresponds to 212–246 (HMFLLARLHMKRIAALPGNGPIWQAANMKGAITIT). A helical transmembrane segment spans residues 247-267 (ILLGVFVVCWAPFFLHLILMI). Over 268 to 281 (SCPRNPYCVCFMSH) the chain is Extracellular. Residues 282–302 (FNMYLILIMCNSVIDPLIYAF) form a helical membrane-spanning segment. Residues 303-326 (RSQEMRKTFKEICCCWYGLASLCV) are Cytoplasmic-facing. Cysteine 316 carries S-palmitoyl cysteine lipidation.

It belongs to the G-protein coupled receptor 1 family. In terms of assembly, homodimer; disulfide-linked, also forms higher order oligomers. Interacts with mrap2a; decreasing ligand-sensitivity. Interacts with mrap2b; increasing ligand-sensitivity and generation of cAMP.

It localises to the cell membrane. Functionally, receptor specific to the heptapeptide core common to adrenocorticotropic hormone and alpha-, beta-, and gamma-MSH. Plays a central role in energy homeostasis and somatic growth. This receptor is mediated by G proteins that stimulate adenylate cyclase (cAMP). The chain is Melanocortin receptor 4 (mc4r) from Danio rerio (Zebrafish).